The chain runs to 1119 residues: Solute carrier family 38 member 10 (1119 aa).

10 consecutive transmembrane segments (helical) span residues 4-24, 36-58, 84-104, 120-140, 153-173, 229-249, 272-292, 323-343, 345-365, and 378-398; these read AAAS…GVSV, IVLG…MFLV, LVET…YVVI, VGGT…VLPL, FSAM…LSSL, IFAS…FFGY, MLRV…ILPC, ALTL…PNVE, ILGL…PALI, and VVLW…LSVS. 2 disordered regions span residues 438–691 and 731–1071; these read AEDG…EEAG and KEIH…DGVI. Composition is skewed to basic and acidic residues over residues 439–454, 466–475, 493–522, 544–559, and 592–603; these read EDGR…REEL, PGREDGKEAP, EAHR…ENKP, DSER…EVGK, and AKEDLGPGDRGL. Ser612 carries the post-translational modification Phosphoserine. The segment covering 652 to 667 has biased composition (pro residues); sequence PPLPAEKPAPGPGLPP. 3 stretches are compositionally biased toward basic and acidic residues: residues 668–677, 731–752, and 763–773; these read EPREQRDVER, KEIH…EVHQ, and EAPEGKARETV. Phosphothreonine is present on Thr772. Ser802 bears the Phosphoserine mark. Basic and acidic residues-rich tracts occupy residues 832-841 and 863-876; these read KLRDGQKDAA and PARE…RLAE. Polar residues predominate over residues 880–889; sequence GQSQDVTGGS. A phosphoserine mark is found at Ser889, Ser965, and Ser997. Basic and acidic residues-rich tracts occupy residues 975–1005, 1012–1022, and 1033–1042; these read HRLD…RGGE, PRQRPEPELGL, and DNAKPNRDLK.

It belongs to the amino acid/polyamine transporter 2 family.

It localises to the membrane. The enzyme catalyses L-glutamate(out) = L-glutamate(in). The catalysed reaction is L-glutamine(out) = L-glutamine(in). It catalyses the reaction L-alanine(in) = L-alanine(out). It carries out the reaction L-serine(in) = L-serine(out). The enzyme catalyses L-leucine(in) = L-leucine(out). Facilitates bidirectional transport of amino acids. May act as a glutamate sensor that regulates glutamate-glutamine cycle and mTOR signaling in the brain. The transport mechanism remains to be elucidated. In Homo sapiens (Human), this protein is Solute carrier family 38 member 10.